The chain runs to 339 residues: Anthranilate phosphoribosyltransferase (339 aa).

5-phospho-alpha-D-ribose 1-diphosphate contacts are provided by residues Gly82, Gly85–Asp86, Thr90, Asn92–Thr95, Lys110–Gly118, and Ser122. Position 82 (Gly82) interacts with anthranilate. Residue Ser94 coordinates Mg(2+). Residue Asn113 coordinates anthranilate. Arg168 contributes to the anthranilate binding site. Mg(2+) contacts are provided by Asp226 and Glu227.

The protein belongs to the anthranilate phosphoribosyltransferase family. In terms of assembly, homodimer. Mg(2+) serves as cofactor.

It carries out the reaction N-(5-phospho-beta-D-ribosyl)anthranilate + diphosphate = 5-phospho-alpha-D-ribose 1-diphosphate + anthranilate. It functions in the pathway amino-acid biosynthesis; L-tryptophan biosynthesis; L-tryptophan from chorismate: step 2/5. In terms of biological role, catalyzes the transfer of the phosphoribosyl group of 5-phosphorylribose-1-pyrophosphate (PRPP) to anthranilate to yield N-(5'-phosphoribosyl)-anthranilate (PRA). In Methanosphaerula palustris (strain ATCC BAA-1556 / DSM 19958 / E1-9c), this protein is Anthranilate phosphoribosyltransferase.